Reading from the N-terminus, the 615-residue chain is Dihydroxy-acid dehydratase (615 aa).

Residue aspartate 81 participates in Mg(2+) binding. Cysteine 122 contacts [2Fe-2S] cluster. Residues aspartate 123 and lysine 124 each contribute to the Mg(2+) site. Position 124 is an N6-carboxylysine (lysine 124). [2Fe-2S] cluster is bound at residue cysteine 193. Mg(2+) is bound at residue glutamate 489. Serine 515 (proton acceptor) is an active-site residue.

Belongs to the IlvD/Edd family. As to quaternary structure, homodimer. The cofactor is [2Fe-2S] cluster. Mg(2+) serves as cofactor.

It catalyses the reaction (2R)-2,3-dihydroxy-3-methylbutanoate = 3-methyl-2-oxobutanoate + H2O. It carries out the reaction (2R,3R)-2,3-dihydroxy-3-methylpentanoate = (S)-3-methyl-2-oxopentanoate + H2O. Its pathway is amino-acid biosynthesis; L-isoleucine biosynthesis; L-isoleucine from 2-oxobutanoate: step 3/4. It functions in the pathway amino-acid biosynthesis; L-valine biosynthesis; L-valine from pyruvate: step 3/4. Functionally, functions in the biosynthesis of branched-chain amino acids. Catalyzes the dehydration of (2R,3R)-2,3-dihydroxy-3-methylpentanoate (2,3-dihydroxy-3-methylvalerate) into 2-oxo-3-methylpentanoate (2-oxo-3-methylvalerate) and of (2R)-2,3-dihydroxy-3-methylbutanoate (2,3-dihydroxyisovalerate) into 2-oxo-3-methylbutanoate (2-oxoisovalerate), the penultimate precursor to L-isoleucine and L-valine, respectively. This chain is Dihydroxy-acid dehydratase, found in Pseudomonas savastanoi pv. phaseolicola (strain 1448A / Race 6) (Pseudomonas syringae pv. phaseolicola (strain 1448A / Race 6)).